The sequence spans 414 residues: Probable uracil permease (414 aa).

The Cytoplasmic portion of the chain corresponds to 1–14; sequence MTNQIPPSLAENQS. Residues 15–38 form a helical membrane-spanning segment; it reads KLKQSFVGLQMLFVAFGALVLVPL. Residues 39–42 lie on the Periplasmic side of the membrane; sequence ITGL. Residues 43–62 traverse the membrane as a helical segment; that stretch reads DSNTALLTAGVGTLLFQFCT. Residues 63–65 lie on the Cytoplasmic side of the membrane; it reads GKQ. The chain crosses the membrane as a discontinuously helical span at residues 66–82; it reads VPIFLASSFAFIAPIQY. Residue F74 participates in uracil binding. The Periplasmic portion of the chain corresponds to 83–91; the sequence is GVQTWGIAT. The helical transmembrane segment at 92 to 112 threads the bilayer; it reads TMGGLAFTGLVYFALSTLVKL. At 113–124 the chain is on the cytoplasmic side; sequence RGAEALQRFFPP. A helical transmembrane segment spans residues 125 to 146; it reads VVVGPVIIIIGMGLAPIAVDMS. Residues 147-155 lie on the Periplasmic side of the membrane; the sequence is LGKNSAYAY. A helical transmembrane segment spans residues 156–171; the sequence is NDAVLVSMVTLLTTLS. Over 172 to 178 the chain is Cytoplasmic; it reads VAVFAKG. The helical transmembrane segment at 179-199 threads the bilayer; sequence LMKLIPIMFGITAGYILCLFL. The Periplasmic segment spans residues 200–224; sequence GLINFQPVIDAPWFSLPKLTTPEFN. Residues 225–248 form a helical membrane-spanning segment; it reads LEAILYMLPIAIAPAVEHVGGIMA. E241 serves as a coordination point for uracil. The Cytoplasmic segment spans residues 249–261; that stretch reads ISSVTGKDFLKKP. The chain crosses the membrane as a helical span at residues 262 to 281; it reads GLHRTLLGDGIATAAASLVG. Residues 282 to 298 traverse the membrane as a discontinuously helical segment; that stretch reads GPPNTTYAEVTGAVMLT. Position 290 (E290) interacts with uracil. At 299–301 the chain is on the cytoplasmic side; sequence RNF. The chain crosses the membrane as a helical span at residues 302–319; that stretch reads NPNIMTWAAVWAIAISFC. Topologically, residues 320–332 are periplasmic; it reads GKVGAFLSTIPTI. The helical transmembrane segment at 333–354 threads the bilayer; it reads VMGGIMMLVFGSIAVVGMSTLI. Topologically, residues 355–365 are cytoplasmic; the sequence is RGKVDVTEARN. The discontinuously helical intramembrane region spans 366-401; sequence LCIISVVMTFGIGNMFVDVGNVSLKGISLCAIVAII. Over 402 to 414 the chain is Cytoplasmic; sequence LNLVLPKAKNEVE.

It belongs to the nucleobase:cation symporter-2 (NCS2) (TC 2.A.40) family.

It is found in the cell inner membrane. It carries out the reaction uracil(in) + H(+)(in) = uracil(out) + H(+)(out). Functionally, transport of uracil in the cell. This is Probable uracil permease (uraA) from Haemophilus influenzae (strain ATCC 51907 / DSM 11121 / KW20 / Rd).